A 335-amino-acid polypeptide reads, in one-letter code: Mycobacterial beta-ketoacyl-[acyl-carrier-protein] synthase III (335 aa).

Residues Cys122 and His258 contribute to the active site. The ACP-binding stretch occupies residues Gln259–Arg263. Asn289 is an active-site residue.

It belongs to the thiolase-like superfamily. FabH family. In terms of assembly, homodimer.

It localises to the cytoplasm. The catalysed reaction is malonyl-[ACP] + dodecanoyl-CoA + H(+) = 3-oxotetradecanoyl-[ACP] + CO2 + CoA. Its pathway is lipid metabolism; fatty acid biosynthesis. It participates in lipid metabolism; mycolic acid biosynthesis. Catalyzes the condensation reaction of fatty acid synthesis by the addition to an acyl acceptor of two carbons from malonyl-ACP. Catalyzes the first condensation reaction which initiates fatty acid synthesis and may therefore play a role in governing the total rate of fatty acid production. Possesses both acetoacetyl-ACP synthase and acetyl transacylase activities. Its substrate specificity determines the biosynthesis of branched-chain and/or straight-chain of fatty acids. This is Mycobacterial beta-ketoacyl-[acyl-carrier-protein] synthase III from Mycobacterium ulcerans (strain Agy99).